Here is a 477-residue protein sequence, read N- to C-terminus: Mannitol 2-dehydrogenase (477 aa).

Position 19-30 (19-30 (IVHIGVGNFHRA)) interacts with NAD(+).

The protein belongs to the mannitol dehydrogenase family. Monomer.

The enzyme catalyses D-mannitol + NAD(+) = D-fructose + NADH + H(+). This is Mannitol 2-dehydrogenase (mtlK) from Cereibacter sphaeroides (Rhodobacter sphaeroides).